Consider the following 181-residue polypeptide: Protein Syd (181 aa).

The protein belongs to the Syd family.

The protein localises to the cell inner membrane. In terms of biological role, interacts with the SecY protein in vivo. May bind preferentially to an uncomplexed state of SecY, thus functioning either as a chelating agent for excess SecY in the cell or as a regulatory factor that negatively controls the translocase function. This Shigella dysenteriae serotype 1 (strain Sd197) protein is Protein Syd.